The sequence spans 397 residues: Na(+)/H(+) antiporter NhaA 3 (397 aa).

11 consecutive transmembrane segments (helical) span residues 18 to 38, 63 to 83, 98 to 118, 129 to 149, 158 to 178, 181 to 201, 207 to 224, 269 to 289, 306 to 326, 340 to 360, and 373 to 393; these read AGGI…NSPF, LLLW…GLEL, IALP…IYWW, GWAI…ALLG, IFLT…IAFF, SKIS…LFIC, TTLR…VALL, VAFL…FIGM, LFFG…LFGW, GVAV…SLAF, and LGIV…LRSA.

Belongs to the NhaA Na(+)/H(+) (TC 2.A.33) antiporter family.

It is found in the cell inner membrane. It catalyses the reaction Na(+)(in) + 2 H(+)(out) = Na(+)(out) + 2 H(+)(in). In terms of biological role, na(+)/H(+) antiporter that extrudes sodium in exchange for external protons. In Saccharophagus degradans (strain 2-40 / ATCC 43961 / DSM 17024), this protein is Na(+)/H(+) antiporter NhaA 3.